The chain runs to 341 residues: Anthranilate phosphoribosyltransferase (341 aa).

5-phospho-alpha-D-ribose 1-diphosphate-binding positions include glycine 80, 83–84 (GD), threonine 88, 90–93 (NIST), 108–116 (KHGNRSVSS), and serine 120. Glycine 80 provides a ligand contact to anthranilate. Mg(2+) is bound at residue serine 92. Residue asparagine 111 coordinates anthranilate. Arginine 166 serves as a coordination point for anthranilate. Positions 225 and 226 each coordinate Mg(2+).

It belongs to the anthranilate phosphoribosyltransferase family. In terms of assembly, homodimer. The cofactor is Mg(2+).

It catalyses the reaction N-(5-phospho-beta-D-ribosyl)anthranilate + diphosphate = 5-phospho-alpha-D-ribose 1-diphosphate + anthranilate. The protein operates within amino-acid biosynthesis; L-tryptophan biosynthesis; L-tryptophan from chorismate: step 2/5. Functionally, catalyzes the transfer of the phosphoribosyl group of 5-phosphorylribose-1-pyrophosphate (PRPP) to anthranilate to yield N-(5'-phosphoribosyl)-anthranilate (PRA). This Shouchella clausii (strain KSM-K16) (Alkalihalobacillus clausii) protein is Anthranilate phosphoribosyltransferase.